Consider the following 380-residue polypeptide: Cytosolic acyl coenzyme A thioester hydrolase (380 aa).

One can recognise a HotDog ACOT-type 1 domain in the interval 50–168 (PCGACITGRI…TLWYVPLSLK (119 aa)). Asparagine 66 is a catalytic residue. An N6-acetyllysine mark is found at lysine 168 and lysine 198. Positions 224-338 (SYSQSSLIHL…FFTYVSLSQE (115 aa)) constitute a HotDog ACOT-type 2 domain. The active site involves aspartate 255. An N6-acetyllysine modification is found at lysine 283. Residues 350 to 380 (ETEDEKKRFEEGKGRYLQMKAKRQGHAEPQP) form a disordered region. The segment covering 353–363 (DEKKRFEEGKG) has biased composition (basic and acidic residues).

As to quaternary structure, homohexamer. As to expression, isoform 4 is expressed exclusively in brain.

The protein localises to the cytoplasm. Its subcellular location is the cytosol. It localises to the mitochondrion. It catalyses the reaction hexadecanoyl-CoA + H2O = hexadecanoate + CoA + H(+). The catalysed reaction is octanoyl-CoA + H2O = octanoate + CoA + H(+). It carries out the reaction dodecanoyl-CoA + H2O = dodecanoate + CoA + H(+). The enzyme catalyses (9Z)-octadecenoyl-CoA + H2O = (9Z)-octadecenoate + CoA + H(+). It catalyses the reaction tetradecanoyl-CoA + H2O = tetradecanoate + CoA + H(+). The catalysed reaction is decanoyl-CoA + H2O = decanoate + CoA + H(+). It carries out the reaction octadecanoyl-CoA + H2O = octadecanoate + CoA + H(+). It functions in the pathway lipid metabolism; fatty acid metabolism. Its function is as follows. Catalyzes the hydrolysis of acyl-CoAs into free fatty acids and coenzyme A (CoASH), regulating their respective intracellular levels. Preferentially hydrolyzes palmitoyl-CoA, but has a broad specificity acting on other fatty acyl-CoAs with chain-lengths of C8-C18. May play an important physiological function in brain. This Homo sapiens (Human) protein is Cytosolic acyl coenzyme A thioester hydrolase (ACOT7).